A 468-amino-acid polypeptide reads, in one-letter code: Tyrosine-protein phosphatase YopH (468 aa).

A disordered region spans residues 127-194 (ARGHVSSHSH…TVSPYGPEAR (68 aa)). Low complexity predominate over residues 130–141 (HVSSHSHSALHA). The Tyrosine-protein phosphatase domain maps to 152–461 (SHLDPRTPPL…DVLIKLAEGQ (310 aa)). The Phosphocysteine intermediate role is filled by cysteine 403.

This sequence belongs to the protein-tyrosine phosphatase family. Non-receptor class subfamily.

The protein resides in the secreted. It carries out the reaction O-phospho-L-tyrosyl-[protein] + H2O = L-tyrosyl-[protein] + phosphate. Essential virulence determinant. This protein is a protein tyrosine phosphatase. The essential function of YopH in Yersinia pathogenesis is host-protein dephosphorylation. It contributes to the ability of the bacteria to resist phagocytosis by peritoneal macrophages. This chain is Tyrosine-protein phosphatase YopH (yopH), found in Yersinia pseudotuberculosis serotype I (strain IP32953).